A 537-amino-acid polypeptide reads, in one-letter code: Ceramide kinase (537 aa).

The segment at 1 to 115 (MGATGAAEPL…CPEEQLCHLW (115 aa)) is essential for enzyme activity. The required for binding to sulfatide and phosphoinositides stretch occupies residues 1 to 125 (MGATGAAEPL…LQTLREMLEK (125 aa)). Positions 128 to 278 (SRPKHLLVFI…MDVSSVHHNS (151 aa)) constitute a DAGKc domain. ATP is bound by residues 138–140 (NPF) and 170–174 (TEHAN). A substrate-binding site is contributed by 195–198 (GGDG). The active-site Proton donor/acceptor is D197. ATP contacts are provided by residues E202, 239-241 (GST), R304, and R310. Residues S340 and S408 each carry the phosphoserine modification. Residue 502–504 (DGE) coordinates ATP.

Ca(2+) serves as cofactor. Requires Mg(2+) as cofactor. In terms of tissue distribution, high level expression in heart, brain, skeletal muscle, kidney and liver; moderate in peripheral blood leukocytes and thymus; very low in spleen, small intestine, placenta and lung.

Its subcellular location is the cytoplasm. The protein localises to the cell membrane. It catalyses the reaction an N-acylsphing-4-enine + ATP = an N-acylsphing-4-enine 1-phosphate + ADP + H(+). The enzyme catalyses N-(hexanoyl)sphing-4-enine + ATP = N-hexanoylsphing-4-enine 1-phosphate + ADP + H(+). It carries out the reaction N-(acetyl)-sphing-4-enine + ATP = N-(acetyl)-sphing-4-enine-1-phosphate + ADP + H(+). The catalysed reaction is N-hexadecanoylsphing-4-enine + ATP = N-(hexadecanoyl)-sphing-4-enine-1-phosphate + ADP + H(+). It catalyses the reaction N-hexanoyl-(4R)-hydroxysphinganine + ATP = N-hexanoyl-(4R)-hydroxysphinganine-1-phosphate + ADP + H(+). With respect to regulation, inhibited by sulfatide. Inhibited by sphinganine, sphingenine, and N,N-Dimethylsphingosine (DMS). Cardiolipin at 0.1 uM significantly increases activity, whereas at concentrations &gt;1 uM has an inhibitory effect. Functionally, catalyzes specifically the phosphorylation of ceramide to form ceramide 1-phosphate. Acts efficiently on natural and analog ceramides (C6, C8, C16 ceramides, and C8-dihydroceramide), to a lesser extent on C2-ceramide and C6-dihydroceramide, but not on other lipids, such as various sphingosines. Shows a greater preference for D-erythro isomer of ceramides. Binds phosphoinositides. This is Ceramide kinase (CERK) from Homo sapiens (Human).